The following is a 685-amino-acid chain: Delta-like protein 4 (685 aa).

The N-terminal stretch at 1–26 (MAAASRSASGWALLLLVALWQQRAAG) is a signal peptide. The Extracellular segment spans residues 27-529 (SGVFQLQLQE…PVGLPPSFPW (503 aa)). Intrachain disulfides connect Cys-50–Cys-54 and Cys-61–Cys-74. N-linked (GlcNAc...) asparagine glycans are attached at residues Asn-108 and Asn-183. The DSL domain occupies 173 to 217 (VICSDNYYGDNCSRLCKKRNDHFGHYVCQPDGNLSCLPGWTGEYC). Cys-175 and Cys-184 are joined by a disulfide. Interaction with Notch1 stretches follow at residues 185–187 (SRL) and 191–195 (RNDHF). A disulfide bridge links Cys-188 with Cys-200. An N-linked (GlcNAc...) asparagine glycan is attached at Asn-205. 25 cysteine pairs are disulfide-bonded: Cys-208-Cys-217, Cys-222-Cys-233, Cys-226-Cys-239, Cys-241-Cys-250, Cys-253-Cys-264, Cys-259-Cys-270, Cys-272-Cys-281, Cys-288-Cys-300, Cys-294-Cys-310, Cys-312-Cys-321, Cys-328-Cys-339, Cys-333-Cys-348, Cys-350-Cys-359, Cys-366-Cys-377, Cys-371-Cys-388, Cys-390-Cys-399, Cys-406-Cys-417, Cys-411-Cys-426, Cys-428-Cys-437, Cys-444-Cys-455, Cys-449-Cys-464, Cys-466-Cys-475, Cys-484-Cys-495, Cys-489-Cys-506, and Cys-508-Cys-517. EGF-like domains lie at 218-251 (QQPICLSGCHEQNGYCSKPAECLCRPGWQGRLCN), 252-282 (ECIPHNGCRHGTCSTPWQCTCDEGWGGLFCD), 284-322 (DLNYCTHHSPCKNGATCSNSGQRSYTCTCRPGYTGVDCE), 324-360 (ELSECDSNPCRNGGSCKDQEDGYHCLCPPGYYGLHCE), 362-400 (STLSCADSPCFNGGSCRERNQGANYACECPPNFTGSNCE), 402-438 (KVDRCTSNPCANGGQCLNRGPSRMCRCRPGFTGTYCE), 440-476 (HVSDCARNPCAHGGTCHDLENGLMCTCPAGFSGRRCE), and 480-518 (SIDACASSPCFNRATCYTDLSTDTFVCNCPYGFVGSRCE). N-linked (GlcNAc...) asparagine glycosylation occurs at Asn-393. The helical transmembrane segment at 530-550 (VAVSLGVGLAVLLVLLGMVAV) threads the bilayer. The Cytoplasmic portion of the chain corresponds to 551–685 (AVRQLRLRRP…RNECVIATEV (135 aa)).

In terms of assembly, interacts with NOTCH4. Interacts (via N-terminal DSL and MNNL domains) with NOTCH1 (via EGF-like domains). As to expression, expressed in vascular endothelium.

It localises to the cell membrane. In terms of biological role, involved in the Notch signaling pathway as Notch ligand. Activates NOTCH1 and NOTCH4. Involved in angiogenesis; negatively regulates endothelial cell proliferation and migration and angiogenic sprouting. Essential for retinal progenitor proliferation. Required for suppressing rod fates in late retinal progenitors as well as for proper generation of other retinal cell types. During spinal cord neurogenesis, inhibits V2a interneuron fate. The sequence is that of Delta-like protein 4 (DLL4) from Homo sapiens (Human).